The chain runs to 495 residues: Cytochrome P450 monooxygenase FrzC (495 aa).

A helical transmembrane segment spans residues G8 to F28. C437 is a binding site for heme.

Belongs to the cytochrome P450 family. The cofactor is heme.

The protein localises to the membrane. The catalysed reaction is (S,S)-2,5-di-(p-hydroxybenzyl)piperazine + reduced [NADPH--hemoprotein reductase] + O2 = (1S,4S)-4-[(4-hydroxyphenyl)methyl]-2,5-diazaspiro[bicyclo[3.2.1]octane-6,1'-cyclohexane]-2',5'-dien-4'-one + oxidized [NADPH--hemoprotein reductase] + 2 H2O + H(+). It participates in secondary metabolite biosynthesis. Its function is as follows. Cytochrome P450 monooxygenase; part of the gene cluster that mediates the biosynthesis of the alkaloid (-)-FR901483, a potent immunosuppressant that shows efficacy in animal models and a probable inhibitor of purine nucleotide biosynthesis by targeting phosphoribosylpyrophosphate amidotransferase (PPAT). Within the pathway, FrzC catalyzes the coupling between N10 and C1' to produce a 1,4-diazabicyclo[3.2.1]octane spiro-fused to a 2,5-cyclohexadienone. FrzC probably first catalyzes homolysis of the N-H bond to generate the N10 radical which is followed by an O-H abstraction to give the phenolic radical which can be delocalized to C1'. Radical coupling between N10 and C1' then forms. The biosynthesis of (-)-FR901483 starts with the condensation of two L-tyrosines to yield (S,S)-dityrosyl-piperazine. This process occurs in 3 steps with the non-canonical nonribosomal peptide synthetase FrzA catalyzing the reduction of L-tyrosine into L-tyrosinal, the spontaneous condensation of 2 L-tyrosinal units, and the subsequent reduction by the NmrA-like family domain-containing oxidoreductase FrzB. The cytochrome P450 monooxygenase FrzC then performs coupling between N10 and C1' to morph the piperazine into a 1,4-diazabicyclo[3.2.1]octane spiro-fused to a 2,5-cyclohexadienone. The dienone portion is further reduced to cyclohexanone by the flavin-dependent reductase FrzD. The methyltranserases (MTs) FrzE and FrzF are then involved in the methylation at the C10' amine and the C4 phenolic oxygen, respectively. The order of the two MTs appear to be interchangeable. Cleavage of the C9-N10' bond by the dioxygenase FrzG then leads to formation of a conjugated iminium. In addition to the oxidation of C9, an additional dehydrogenation between C7 and C8 can occur to give a likely shunt product. The next biosynthetic step is the intramolecular aldol condensation catalyzed by the newly identified aldolase FrzH to yield an aza-tricyclic product with the formation of a C9-C3' bond. The short-chain dehydrogenase/reductase FrzI then produces dephospho-(-)-FR901483 that is phosphorylated at C4'-OH into (-)-FR901483 by the phosphotransferase FrzJ. The polypeptide is Cytochrome P450 monooxygenase FrzC (Cladobotryum sp).